The following is a 227-amino-acid chain: Cytidylate kinase (227 aa).

Gly-12 to Thr-20 serves as a coordination point for ATP.

The protein belongs to the cytidylate kinase family. Type 1 subfamily.

Its subcellular location is the cytoplasm. It carries out the reaction CMP + ATP = CDP + ADP. The catalysed reaction is dCMP + ATP = dCDP + ADP. This Citrobacter koseri (strain ATCC BAA-895 / CDC 4225-83 / SGSC4696) protein is Cytidylate kinase.